We begin with the raw amino-acid sequence, 211 residues long: Probable nicotinate-nucleotide adenylyltransferase (211 aa).

This sequence belongs to the NadD family.

The enzyme catalyses nicotinate beta-D-ribonucleotide + ATP + H(+) = deamido-NAD(+) + diphosphate. It functions in the pathway cofactor biosynthesis; NAD(+) biosynthesis; deamido-NAD(+) from nicotinate D-ribonucleotide: step 1/1. Catalyzes the reversible adenylation of nicotinate mononucleotide (NaMN) to nicotinic acid adenine dinucleotide (NaAD). This chain is Probable nicotinate-nucleotide adenylyltransferase, found in Cellvibrio japonicus (strain Ueda107) (Pseudomonas fluorescens subsp. cellulosa).